Here is a 364-residue protein sequence, read N- to C-terminus: Variable large protein 21 (364 aa).

The first 26 residues, 1-26 (MRKRISAIINKLNISIMMMIVVLMIG), serve as a signal peptide directing secretion. Residue C27 is the site of N-palmitoyl cysteine attachment. A lipid anchor (S-diacylglycerol cysteine) is attached at C27.

Belongs to the variable large protein (Vlp) family. Alpha subfamily.

Its subcellular location is the cell outer membrane. In terms of biological role, the Vlp and Vsp proteins are antigenically distinct proteins, only one vlp or vsp gene is transcriptionally active at any one time. Switching between these genes is a mechanism of host immune response evasion. The protein is Variable large protein 21 of Borrelia hermsii.